Here is an 82-residue protein sequence, read N- to C-terminus: uncharacterized protein (82 aa).

This is an uncharacterized protein from Methanocaldococcus jannaschii (strain ATCC 43067 / DSM 2661 / JAL-1 / JCM 10045 / NBRC 100440) (Methanococcus jannaschii).